The primary structure comprises 1480 residues: UDP-N-acetylglucosamine--peptide N-acetylglucosaminyltransferase (1480 aa).

4 TPR repeats span residues 38–71, 113–146, 176–209, and 288–321; these read IFLY…SKQK, VQVL…STSN, ATIL…IKDP, and STIC…QPSF. The segment covering 468-485 has biased composition (basic and acidic residues); that stretch reads PQEKESPKSDKIASEKPL. A disordered region spans residues 468-497; it reads PQEKESPKSDKIASEKPLVESNPGRSRTPS. 2 TPR repeats span residues 613-646 and 648-680; these read YEPF…NPRF and DGYL…DPDN. Residues 1093–1128 form a disordered region; the sequence is LSLDGSDATSSSVDSGIGSRTHSEAPIGGGDKDEGA. The span at 1099-1112 shows a compositional bias: polar residues; sequence DATSSSVDSGIGSR. Residues Q1269, K1272, 1333-1336, 1351-1353, and D1357 contribute to the UDP site; these read HIRR and GST.

Belongs to the glycosyltransferase 41 family. O-GlcNAc transferase subfamily.

It localises to the cytoplasm. It is found in the nucleus. The catalysed reaction is L-seryl-[protein] + UDP-N-acetyl-alpha-D-glucosamine = 3-O-(N-acetyl-beta-D-glucosaminyl)-L-seryl-[protein] + UDP + H(+). The enzyme catalyses L-threonyl-[protein] + UDP-N-acetyl-alpha-D-glucosamine = 3-O-(N-acetyl-beta-D-glucosaminyl)-L-threonyl-[protein] + UDP + H(+). It participates in protein modification; protein glycosylation. In terms of biological role, catalyzes the transfer of a single N-acetylglucosamine from UDP-GlcNAc to a serine or threonine residue in cytoplasmic and nuclear proteins resulting in their modification with a beta-linked N-acetylglucosamine (O-GlcNAc). This is UDP-N-acetylglucosamine--peptide N-acetylglucosaminyltransferase from Giardia intestinalis (strain ATCC 50803 / WB clone C6) (Giardia lamblia).